Here is a 1029-residue protein sequence, read N- to C-terminus: U2 snRNP-associated SURP motif-containing protein (1029 aa).

2 disordered regions span residues 1–111 and 141–274; these read MADK…EDEK and VNAA…PSTT. Position 2 is an N-acetylalanine (Ala-2). Residues 7 to 16 show a composition bias toward polar residues; sequence GGSQKASSKT. The segment covering 45–54 has biased composition (basic residues); sequence TRPKSPRKHN. Over residues 55-64 the composition is skewed to basic and acidic residues; sequence YRNESARESL. Residue Ser-67 is modified to Phosphoserine. A Glycyl lysine isopeptide (Lys-Gly) (interchain with G-Cter in SUMO2) cross-link involves residue Lys-80. The stretch at 92–121 forms a coiled coil; it reads AKRTLSKKEQEELKKKEDEKAAAEIYEEFL. Composition is skewed to basic and acidic residues over residues 97-111 and 144-155; these read SKKE…EDEK and AKEEHETDEKRG. Residues Lys-145 and Lys-168 each participate in a glycyl lysine isopeptide (Lys-Gly) (interchain with G-Cter in SUMO2) cross-link. Residues 169–178 show a composition bias toward polar residues; it reads NPPNQSSNER. Residues 186 to 222 show a composition bias toward basic and acidic residues; the sequence is ETKKPPLKKGEKEKKKSNLELFKEELKQIQEERDERH. Residues 192-232 adopt a coiled-coil conformation; sequence LKKGEKEKKKSNLELFKEELKQIQEERDERHKTKGRLSRFE. At Ser-202 the chain carries Phosphoserine. A Glycyl lysine isopeptide (Lys-Gly) (interchain with G-Cter in SUMO2) cross-link involves residue Lys-208. The residue at position 236 (Ser-236) is a Phosphoserine. Residues 239 to 249 are compositionally biased toward basic and acidic residues; it reads DGQRRSMDAPS. One can recognise an RRM domain in the interval 274-355; that stretch reads TNLYLGNINP…FEMKLGWGKA (82 aa). One copy of the SURP motif repeat lies at 430–473; that stretch reads LIHRMIEFVVREGPMFEAMIMNREINNPMFRFLFENQTPAHVYY. At Ser-485 the chain carries Phosphoserine. Residues 534–679 form the CID domain; sequence LKEEQRDKLE…KLQNIFLGLV (146 aa). Thr-719 carries the phosphothreonine modification. Residues Lys-748 and Lys-749 each participate in a glycyl lysine isopeptide (Lys-Gly) (interchain with G-Cter in SUMO2) cross-link. Position 760 is an N6-acetyllysine; alternate (Lys-760). Residue Lys-760 forms a Glycyl lysine isopeptide (Lys-Gly) (interchain with G-Cter in SUMO2); alternate linkage. Disordered regions lie at residues 778–841 and 855–1029; these read KWEL…EEKR and QDEL…KNKH. The span at 786-806 shows a compositional bias: acidic residues; sequence EESEEEENQNQEEESEDEEDT. Residues Ser-788, Ser-800, and Ser-811 each carry the phosphoserine modification. Composition is skewed to basic and acidic residues over residues 810–841 and 874–922; these read KSEE…EEKR and QVEH…TPTR. Glycyl lysine isopeptide (Lys-Gly) (interchain with G-Cter in SUMO2) cross-links involve residues Lys-822, Lys-829, and Lys-832. A coiled-coil region spans residues 837–915; sequence SEEKRAKLRE…ESRSKDKKEK (79 aa). Thr-931 is subject to Phosphothreonine. Ser-946 and Ser-948 each carry phosphoserine. Positions 950-980 are enriched in basic and acidic residues; sequence KSERSERSERSHKESSRSRSSHKDSPRDVSK. Over residues 991 to 1029 the composition is skewed to basic residues; sequence TPKRSRRSRSRSPKKSGKKSRSQSRSPHRSHKKSKKNKH.

This sequence belongs to the splicing factor SR family. Interacts with ERBB4.

It localises to the nucleus. The polypeptide is U2 snRNP-associated SURP motif-containing protein (U2SURP) (Homo sapiens (Human)).